The following is a 64-amino-acid chain: UPF0337 protein SAR0874 (64 aa).

Residues 1-40 are disordered; sequence MADESKFEQAKGNVKETVGNVTDNKNLENEGKEDKASGKA. Residues 25–40 are compositionally biased toward basic and acidic residues; sequence KNLENEGKEDKASGKA.

The protein belongs to the UPF0337 (CsbD) family.

The sequence is that of UPF0337 protein SAR0874 from Staphylococcus aureus (strain MRSA252).